A 778-amino-acid polypeptide reads, in one-letter code: Endonuclease MutS2 (778 aa).

328 to 335 serves as a coordination point for ATP; sequence GPNTGGKT. The Smr domain occupies 702–777; that stretch reads LDLRGKRYEE…GSGATIVTFK (76 aa).

Belongs to the DNA mismatch repair MutS family. MutS2 subfamily. As to quaternary structure, homodimer. Binds to stalled ribosomes, contacting rRNA.

Functionally, endonuclease that is involved in the suppression of homologous recombination and thus may have a key role in the control of bacterial genetic diversity. Acts as a ribosome collision sensor, splitting the ribosome into its 2 subunits. Detects stalled/collided 70S ribosomes which it binds and splits by an ATP-hydrolysis driven conformational change. Acts upstream of the ribosome quality control system (RQC), a ribosome-associated complex that mediates the extraction of incompletely synthesized nascent chains from stalled ribosomes and their subsequent degradation. Probably generates substrates for RQC. The sequence is that of Endonuclease MutS2 from Streptococcus pneumoniae (strain JJA).